The following is a 466-amino-acid chain: Glutamate--tRNA ligase (466 aa).

The short motif at 9–19 is the 'HIGH' region element; it reads PSPTGDLHVGS. The 'KMSKS' region signature appears at 237–241; that stretch reads KLSKR. Residue Lys240 coordinates ATP.

The protein belongs to the class-I aminoacyl-tRNA synthetase family. Glutamate--tRNA ligase type 1 subfamily. In terms of assembly, monomer.

The protein resides in the cytoplasm. It catalyses the reaction tRNA(Glu) + L-glutamate + ATP = L-glutamyl-tRNA(Glu) + AMP + diphosphate. In terms of biological role, catalyzes the attachment of glutamate to tRNA(Glu) in a two-step reaction: glutamate is first activated by ATP to form Glu-AMP and then transferred to the acceptor end of tRNA(Glu). The polypeptide is Glutamate--tRNA ligase (Baumannia cicadellinicola subsp. Homalodisca coagulata).